A 55-amino-acid chain; its full sequence is ATP synthase protein 8 (55 aa).

A helical membrane pass occupies residues 8–28 (WWIVNFSLIWASVLIVISLLL). The disordered stretch occupies residues 34–55 (NSAGQSSSSLTLNKTTTNWQWL). A compositionally biased stretch (low complexity) spans 39–55 (SSSSLTLNKTTTNWQWL).

The protein belongs to the ATPase protein 8 family. In terms of assembly, F-type ATPases have 2 components, CF(1) - the catalytic core - and CF(0) - the membrane proton channel.

Its subcellular location is the mitochondrion membrane. Functionally, mitochondrial membrane ATP synthase (F(1)F(0) ATP synthase or Complex V) produces ATP from ADP in the presence of a proton gradient across the membrane which is generated by electron transport complexes of the respiratory chain. F-type ATPases consist of two structural domains, F(1) - containing the extramembraneous catalytic core and F(0) - containing the membrane proton channel, linked together by a central stalk and a peripheral stalk. During catalysis, ATP synthesis in the catalytic domain of F(1) is coupled via a rotary mechanism of the central stalk subunits to proton translocation. Part of the complex F(0) domain. Minor subunit located with subunit a in the membrane. This is ATP synthase protein 8 (MT-ATP8) from Strongylocentrotus purpuratus (Purple sea urchin).